The primary structure comprises 251 residues: Astacin (251 aa).

The signal sequence occupies residues 1-15; that stretch reads MQCAVLLVLLGVVAA. Residues 16-49 constitute a propeptide, activation peptide; that stretch reads SPIIPEAARALYYNDGMFEGDIKLRAGRQPARVG. Residues 50–248 form the Peptidase M12A domain; it reads AAILGDEYLW…INNLYTNECS (199 aa). 2 cysteine pairs are disulfide-bonded: C91-C247 and C113-C133. H141 provides a ligand contact to Zn(2+). Residue E142 is part of the active site. H145 and H151 together coordinate Zn(2+). Residues 250 to 251 constitute a propeptide that is removed on maturation; it reads RH.

As to quaternary structure, monomer. It depends on Zn(2+) as a cofactor.

The enzyme catalyses Hydrolysis of peptide bonds in substrates containing five or more amino acids, preferentially with Ala in P1', and Pro in P2'.. In terms of biological role, metalloprotease. This protease prefers to cleave in front of small aliphatic residues (P1'). The presence of Lys or Arg in the P1 and P2 position yields high-turnover substrates. In the P3 position the enzyme prefers Pro &gt; Val &gt; Leu &gt; Ala &gt; Gly. In Astacus astacus (Noble crayfish), this protein is Astacin.